Reading from the N-terminus, the 283-residue chain is Elongation factor Ts (283 aa).

The involved in Mg(2+) ion dislocation from EF-Tu stretch occupies residues 80–83; that stretch reads TDFV.

The protein belongs to the EF-Ts family.

The protein localises to the cytoplasm. Associates with the EF-Tu.GDP complex and induces the exchange of GDP to GTP. It remains bound to the aminoacyl-tRNA.EF-Tu.GTP complex up to the GTP hydrolysis stage on the ribosome. The chain is Elongation factor Ts from Citrobacter koseri (strain ATCC BAA-895 / CDC 4225-83 / SGSC4696).